Reading from the N-terminus, the 139-residue chain is NADH-quinone oxidoreductase subunit A (139 aa).

3 consecutive transmembrane segments (helical) span residues 11–31 (LWPL…MLAL), 70–90 (LIAI…AWAI), and 97–117 (WPGY…LVYL).

It belongs to the complex I subunit 3 family. As to quaternary structure, NDH-1 is composed of 14 different subunits. Subunits NuoA, H, J, K, L, M, N constitute the membrane sector of the complex.

It is found in the cell inner membrane. The enzyme catalyses a quinone + NADH + 5 H(+)(in) = a quinol + NAD(+) + 4 H(+)(out). In terms of biological role, NDH-1 shuttles electrons from NADH, via FMN and iron-sulfur (Fe-S) centers, to quinones in the respiratory chain. The immediate electron acceptor for the enzyme in this species is believed to be ubiquinone. Couples the redox reaction to proton translocation (for every two electrons transferred, four hydrogen ions are translocated across the cytoplasmic membrane), and thus conserves the redox energy in a proton gradient. In Methylococcus capsulatus (strain ATCC 33009 / NCIMB 11132 / Bath), this protein is NADH-quinone oxidoreductase subunit A.